Here is a 72-residue protein sequence, read N- to C-terminus: uncharacterized protein (72 aa).

The stretch at 27-55 (YTQNLINELQEARDSINDLQRAHERLKLV) forms a coiled coil.

This is an uncharacterized protein from Schizosaccharomyces pombe (strain 972 / ATCC 24843) (Fission yeast).